The following is a 512-amino-acid chain: Metal transporter Nramp4 (512 aa).

12 helical membrane passes run 52–72, 80–100, 129–149, 161–181, 189–209, 235–255, 277–297, 323–343, 371–391, 402–422, 440–460, and 468–488; these read LWLFTGPGFLMSIAFLDPGNL, AIAGYSLIWLLMWATAIGLLI, MVLWIMAEIALIGADIQEVIG, LVPLWAGVVITALDCFIFLFL, LEAVFAILIATMALAFAWMFG, AVGIVGCIIMPHNVFLHSALV, IESTGALAVSFIINVFVTTVF, YGGGFFPILYIWAIGVLAAGQ, ALITRSCAIIPTMIVALVFDS, WLNVLQSVQIPFAVIPLLCLV, ISWIVAALVIAINGYLMVDFF, and ILLVPVIIFAIAYVVFVLYLI.

Belongs to the NRAMP (TC 2.A.55) family. Expressed in vascular tissues.

Its subcellular location is the vacuole membrane. Functionally, vacuolar metal transporter involved in intracellular metal homeostasis. Can transport iron (Fe), manganese (Mn) and cadmium (Cd). Regulates metal accumulation under Fe starvation. Acts redundantly with NRAMP3 to mobilize vacuolar Fe and provide sufficient Fe during seed germination. In association with NRAMP3, required for optimal growth and photosynthesis under Mn deficiency. Exports Mn from vacuoles in leaf mesophyll cells, making Mn available for functional photosystem II in chloroplasts. This Arabidopsis thaliana (Mouse-ear cress) protein is Metal transporter Nramp4 (NRAMP4).